A 453-amino-acid polypeptide reads, in one-letter code: Alpha-galacturonidase (453 aa).

Residue 11 to 72 (IKIAYIGGGS…SQWEYKSVDS (62 aa)) participates in NAD(+) binding. Substrate is bound at residue Asn151. Cys173 contacts Mn(2+). The active-site Proton donor is His174. Position 209 (His209) interacts with Mn(2+).

It belongs to the glycosyl hydrolase 4 family. In terms of assembly, homotetramer. It depends on NAD(+) as a cofactor. The cofactor is Mn(2+).

It catalyses the reaction [(1-&gt;4)-alpha-D-galacturonosyl](n) + H2O = alpha-D-galacturonate + [(1-&gt;4)-alpha-D-galacturonosyl](n-1). Its function is as follows. Alpha-galacturonidase able to catalyze the hydrolysis of the chromogenic substrate p-nitrophenyl-alpha-D-galacturonic acid (pNPalphaGalUA). It is probable that alpha-1,4-di-galacturonate (GalUA(2)) is the naturally occurring substrate. In Thermoanaerobacter italicus (strain DSM 9252 / Ab9), this protein is Alpha-galacturonidase.